Reading from the N-terminus, the 221-residue chain is uncharacterized protein (221 aa).

Composition is skewed to low complexity over residues 1 to 27 and 140 to 162; these read MNNNNNNNNNNNNNNNNNNNNNNNNNN and TTTSSTTTTTTTTSTTTTNNSSS. Disordered regions lie at residues 1 to 28 and 140 to 205; these read MNNNNNNNNNNNNNNNNNNNNNNNNNNE and TTTS…NIGG.

This is an uncharacterized protein from Dictyostelium discoideum (Social amoeba).